A 245-amino-acid polypeptide reads, in one-letter code: tRNA pseudouridine synthase A (245 aa).

D52 (nucleophile) is an active-site residue. Y111 contributes to the substrate binding site.

The protein belongs to the tRNA pseudouridine synthase TruA family. Homodimer.

The catalysed reaction is uridine(38/39/40) in tRNA = pseudouridine(38/39/40) in tRNA. In terms of biological role, formation of pseudouridine at positions 38, 39 and 40 in the anticodon stem and loop of transfer RNAs. This chain is tRNA pseudouridine synthase A, found in Rhodospirillum centenum (strain ATCC 51521 / SW).